A 169-amino-acid polypeptide reads, in one-letter code: Transcription regulatory protein SNF11 (169 aa).

The segment at 1–24 (MSSEIAYSNTNTNTENENRNTGAG) is disordered. Serine 2 carries the post-translational modification N-acetylserine. The segment covering 9-21 (NTNTNTENENRNT) has biased composition (low complexity). Tandem repeats lie at residues 28 to 31 (NTNA), 32 to 35 (NANA), 36 to 39 (NATA), 40 to 43 (NATA), 44 to 47 (NATA), 48 to 51 (NATA), 76 to 80 (LLARV), and 160 to 165 (LLLARV). Residues 28–51 (NTNANANANATANATANATANATA) are 6 X 4 AA tandem repeats of N-[AT]-[NT]-A. Residues 76–165 (LLARVIQMNN…SKLYLLLARV (90 aa)) form a 2 X 5 AA repeats of L-L-A-R-V region.

Component of the SWI/SNF global transcription activator complex. The 1.14 MDa SWI/SNF complex is composed of 11 different subunits: one copy each of SWI1, SNF2/SWI2, SNF5, SNF12/SWP73, ARP7/SWP61, ARP9/SWP59; two copies each of SWI3, SNF6, SNF11, SWP82; and three copies of TAF14/SWP29.

It is found in the nucleus. Involved in transcriptional activation. Component of the SWI/SNF complex, an ATP-dependent chromatin remodeling complex, which is required for the positive and negative regulation of gene expression of a large number of genes. It changes chromatin structure by altering DNA-histone contacts within a nucleosome, leading eventually to a change in nucleosome position, thus facilitating or repressing binding of gene-specific transcription factors. The sequence is that of Transcription regulatory protein SNF11 (SNF11) from Saccharomyces cerevisiae (strain ATCC 204508 / S288c) (Baker's yeast).